We begin with the raw amino-acid sequence, 511 residues long: Maturase K (511 aa).

This sequence belongs to the intron maturase 2 family. MatK subfamily.

The protein resides in the plastid. It localises to the chloroplast. Its function is as follows. Usually encoded in the trnK tRNA gene intron. Probably assists in splicing its own and other chloroplast group II introns. This Psathyrostachys juncea (Russian wildrye) protein is Maturase K.